A 130-amino-acid polypeptide reads, in one-letter code: Small ribosomal subunit protein uS8B (130 aa).

It belongs to the universal ribosomal protein uS8 family. In terms of assembly, component of the small ribosomal subunit (SSU). Mature yeast ribosomes consist of a small (40S) and a large (60S) subunit. The 40S small subunit contains 1 molecule of ribosomal RNA (18S rRNA) and 33 different proteins (encoded by 57 genes). The large 60S subunit contains 3 rRNA molecules (25S, 5.8S and 5S rRNA) and 46 different proteins (encoded by 81 genes).

It localises to the cytoplasm. Component of the ribosome, a large ribonucleoprotein complex responsible for the synthesis of proteins in the cell. The small ribosomal subunit (SSU) binds messenger RNAs (mRNAs) and translates the encoded message by selecting cognate aminoacyl-transfer RNA (tRNA) molecules. The large subunit (LSU) contains the ribosomal catalytic site termed the peptidyl transferase center (PTC), which catalyzes the formation of peptide bonds, thereby polymerizing the amino acids delivered by tRNAs into a polypeptide chain. The nascent polypeptides leave the ribosome through a tunnel in the LSU and interact with protein factors that function in enzymatic processing, targeting, and the membrane insertion of nascent chains at the exit of the ribosomal tunnel. In Saccharomyces cerevisiae (strain ATCC 204508 / S288c) (Baker's yeast), this protein is Small ribosomal subunit protein uS8B.